We begin with the raw amino-acid sequence, 448 residues long: Phosphoglucosamine mutase (448 aa).

Serine 100 serves as the catalytic Phosphoserine intermediate. Mg(2+)-binding residues include serine 100, aspartate 240, aspartate 242, and aspartate 244. Phosphoserine is present on serine 100.

It belongs to the phosphohexose mutase family. Mg(2+) is required as a cofactor. In terms of processing, activated by phosphorylation.

It carries out the reaction alpha-D-glucosamine 1-phosphate = D-glucosamine 6-phosphate. Catalyzes the conversion of glucosamine-6-phosphate to glucosamine-1-phosphate. This is Phosphoglucosamine mutase from Clostridium perfringens (strain ATCC 13124 / DSM 756 / JCM 1290 / NCIMB 6125 / NCTC 8237 / Type A).